The sequence spans 332 residues: MAAPQVKSSSELTMAVLGCGTMGISILSGILSSLSSIAQDPSPPPTNPPALPRHFIATVRSPSSVAKVESALSPLVKPSVSTLRVLQSTSNVSAAAEADIILLGCKPYMVSGLLSASGMKDALTVKHTEGHARSQKIIISICAGVTVPDLERVLREDVGLSADNLPIVVRAMPNTASKIRESMTVINTVDPPLPDTVTELLTWIFERIGEVVYLPPHLMDACTSLCASGTAFFALMMEAAADGGVAMGLPRAEANRMAAQTMRGAAGLVLEGEHPAILREKVSTPGGCTIGGLLVLEEGGVRAAVARAVREATVVASLLGGGGAKNVNGTRH.

It belongs to the pyrroline-5-carboxylate reductase family.

It carries out the reaction L-proline + NADP(+) = (S)-1-pyrroline-5-carboxylate + NADPH + 2 H(+). The enzyme catalyses L-proline + NAD(+) = (S)-1-pyrroline-5-carboxylate + NADH + 2 H(+). It participates in amino-acid biosynthesis; L-proline biosynthesis; L-proline from L-glutamate 5-semialdehyde: step 1/1. The chain is Pyrroline-5-carboxylate reductase (pro-1) from Neurospora crassa (strain ATCC 24698 / 74-OR23-1A / CBS 708.71 / DSM 1257 / FGSC 987).